We begin with the raw amino-acid sequence, 125 residues long: Large ribosomal subunit protein bL12 (125 aa).

This sequence belongs to the bacterial ribosomal protein bL12 family. As to quaternary structure, homodimer. Part of the ribosomal stalk of the 50S ribosomal subunit. Forms a multimeric L10(L12)X complex, where L10 forms an elongated spine to which 2 to 4 L12 dimers bind in a sequential fashion. Binds GTP-bound translation factors.

Functionally, forms part of the ribosomal stalk which helps the ribosome interact with GTP-bound translation factors. Is thus essential for accurate translation. The protein is Large ribosomal subunit protein bL12 of Campylobacter jejuni (strain RM1221).